The primary structure comprises 212 residues: Peptide methionine sulfoxide reductase MsrA (212 aa).

Cys-52 is an active-site residue.

Belongs to the MsrA Met sulfoxide reductase family.

It carries out the reaction L-methionyl-[protein] + [thioredoxin]-disulfide + H2O = L-methionyl-(S)-S-oxide-[protein] + [thioredoxin]-dithiol. It catalyses the reaction [thioredoxin]-disulfide + L-methionine + H2O = L-methionine (S)-S-oxide + [thioredoxin]-dithiol. Functionally, has an important function as a repair enzyme for proteins that have been inactivated by oxidation. Catalyzes the reversible oxidation-reduction of methionine sulfoxide in proteins to methionine. The polypeptide is Peptide methionine sulfoxide reductase MsrA (Escherichia fergusonii (strain ATCC 35469 / DSM 13698 / CCUG 18766 / IAM 14443 / JCM 21226 / LMG 7866 / NBRC 102419 / NCTC 12128 / CDC 0568-73)).